We begin with the raw amino-acid sequence, 44 residues long: Hyaluronidase CdtHya1 (44 aa).

It belongs to the glycosyl hydrolase 56 family. As to quaternary structure, monomer. Post-translationally, contains disulfide bonds. Glycosylated. Expressed by the venom gland.

Its subcellular location is the secreted. The enzyme catalyses Random hydrolysis of (1-&gt;4)-linkages between N-acetyl-beta-D-glucosamine and D-glucuronate residues in hyaluronate.. Functionally, snake venom endo-hyaluronidase that degrades hyaluronan to smaller oligosaccharide fragments. In venom, it is not toxic by itself, but increases the diffusion of other venom proteins such as crotoxin (a neurotoxic and myotoxic PLA2) by degrading the extracellular matrix. In addition, it displays antiedematogenic activity, since it significantly diminishes the oedematogenic activity of crotoxin (probably by direct substrate hydrolysis, since hyaluronan possesses strong water-binding capacity). This Crotalus durissus terrificus (South American rattlesnake) protein is Hyaluronidase CdtHya1.